We begin with the raw amino-acid sequence, 810 residues long: Soluble starch synthase 2-3, chloroplastic/amyloplastic (810 aa).

Residues 1–16 (MSSAVVASSTTFLVAL) constitute a chloroplast transit peptide. Disordered stretches follow at residues 43–265 (GRAG…PIPA) and 281–313 (EPDA…SGPL). The span at 63–83 (RDAGVVRRADDGENEAAVERA) shows a compositional bias: basic and acidic residues. The segment covering 84 to 93 (GEDDEEEEEF) has biased composition (acidic residues). Positions 102–116 (RSRRGGVGKVLKRRG) are enriched in basic residues. A compositionally biased stretch (low complexity) spans 129–148 (DAARVRGAAAPAPAPTQDAA). Residues 281–310 (EPDAAEDGDDDDDWADSDASDSEIDQDDDS) show a composition bias toward acidic residues. Position 333 (Lys-333) interacts with ADP-alpha-D-glucose.

Belongs to the glycosyltransferase 1 family. Bacterial/plant glycogen synthase subfamily. In terms of tissue distribution, expressed most exclusively in endosperm.

The protein resides in the plastid. It localises to the amyloplast. Its subcellular location is the chloroplast. The enzyme catalyses [(1-&gt;4)-alpha-D-glucosyl](n) + ADP-alpha-D-glucose = [(1-&gt;4)-alpha-D-glucosyl](n+1) + ADP + H(+). Its pathway is glycan biosynthesis; starch biosynthesis. In terms of biological role, plays an important role during endosperm starch synthesis. Determines the type of amylopectin structure of starch grain. Synthesizes long B1 amylopectin chains by elongating short A and B1 chains, independently of the other soluble starch synthases. Barely active in japonica subspecies. This chain is Soluble starch synthase 2-3, chloroplastic/amyloplastic (SSII-3), found in Oryza sativa subsp. indica (Rice).